Reading from the N-terminus, the 270-residue chain is UPF0354 protein BCAH187_A4826 (270 aa).

The protein belongs to the UPF0354 family.

The polypeptide is UPF0354 protein BCAH187_A4826 (Bacillus cereus (strain AH187)).